The primary structure comprises 273 residues: Large ribosomal subunit protein uL2 (273 aa).

Residues 221-262 (RGTAMNPVDHPHGGGEGRNFGKHPVTPWGVQTKGKKTRHNKR) form a disordered region. Residues 253–262 (KGKKTRHNKR) show a composition bias toward basic residues.

It belongs to the universal ribosomal protein uL2 family. Part of the 50S ribosomal subunit. Forms a bridge to the 30S subunit in the 70S ribosome.

Functionally, one of the primary rRNA binding proteins. Required for association of the 30S and 50S subunits to form the 70S ribosome, for tRNA binding and peptide bond formation. It has been suggested to have peptidyltransferase activity; this is somewhat controversial. Makes several contacts with the 16S rRNA in the 70S ribosome. In Haemophilus influenzae (strain ATCC 51907 / DSM 11121 / KW20 / Rd), this protein is Large ribosomal subunit protein uL2.